Consider the following 255-residue polypeptide: Pimeloyl-[acyl-carrier protein] methyl ester esterase (255 aa).

The region spanning Leu16–Pro242 is the AB hydrolase-1 domain. Substrate contacts are provided by residues Trp22, Ser82–Leu83, and Phe143–Gln147. Ser82 (nucleophile) is an active-site residue. Active-site residues include Asp207 and His235. A substrate-binding site is contributed by His235.

Belongs to the AB hydrolase superfamily. Carboxylesterase BioH family. Monomer.

The protein localises to the cytoplasm. The enzyme catalyses 6-carboxyhexanoyl-[ACP] methyl ester + H2O = 6-carboxyhexanoyl-[ACP] + methanol + H(+). It participates in cofactor biosynthesis; biotin biosynthesis. The physiological role of BioH is to remove the methyl group introduced by BioC when the pimeloyl moiety is complete. It allows to synthesize pimeloyl-ACP via the fatty acid synthetic pathway through the hydrolysis of the ester bonds of pimeloyl-ACP esters. The protein is Pimeloyl-[acyl-carrier protein] methyl ester esterase of Vibrio vulnificus (strain CMCP6).